A 125-amino-acid polypeptide reads, in one-letter code: Small ribosomal subunit protein uS12 (125 aa).

The interval 1-23 is disordered; it reads MATVNQLVRKGRTKRTAKSSVPA. Position 89 is a 3-methylthioaspartic acid (D89). The tract at residues 102-125 is disordered; sequence ADTAGVDKRRQGRSKYGAKRPKKK. The segment covering 111–125 has biased composition (basic residues); the sequence is RQGRSKYGAKRPKKK.

Belongs to the universal ribosomal protein uS12 family. In terms of assembly, part of the 30S ribosomal subunit. Contacts proteins S8 and S17. May interact with IF1 in the 30S initiation complex.

Functionally, with S4 and S5 plays an important role in translational accuracy. Interacts with and stabilizes bases of the 16S rRNA that are involved in tRNA selection in the A site and with the mRNA backbone. Located at the interface of the 30S and 50S subunits, it traverses the body of the 30S subunit contacting proteins on the other side and probably holding the rRNA structure together. The combined cluster of proteins S8, S12 and S17 appears to hold together the shoulder and platform of the 30S subunit. This is Small ribosomal subunit protein uS12 from Halorhodospira halophila (strain DSM 244 / SL1) (Ectothiorhodospira halophila (strain DSM 244 / SL1)).